The sequence spans 246 residues: 3-deoxy-manno-octulosonate cytidylyltransferase (246 aa).

This sequence belongs to the KdsB family.

Its subcellular location is the cytoplasm. It catalyses the reaction 3-deoxy-alpha-D-manno-oct-2-ulosonate + CTP = CMP-3-deoxy-beta-D-manno-octulosonate + diphosphate. Its pathway is nucleotide-sugar biosynthesis; CMP-3-deoxy-D-manno-octulosonate biosynthesis; CMP-3-deoxy-D-manno-octulosonate from 3-deoxy-D-manno-octulosonate and CTP: step 1/1. The protein operates within bacterial outer membrane biogenesis; lipopolysaccharide biosynthesis. Its function is as follows. Activates KDO (a required 8-carbon sugar) for incorporation into bacterial lipopolysaccharide in Gram-negative bacteria. The polypeptide is 3-deoxy-manno-octulosonate cytidylyltransferase (Rickettsia prowazekii (strain Madrid E)).